A 199-amino-acid polypeptide reads, in one-letter code: Ribonuclease HI (199 aa).

Residues 1 to 68 form a not required for RNase H activity region; that stretch reads MPVVECDIQT…TAVVQPDRGG (68 aa). In terms of domain architecture, RNase H type-1 spans 66 to 197; that stretch reads RGGRVHAYFD…ADALANEALD (132 aa). The tract at residues 69-199 is as active as intact RNase H; sequence RVHAYFDGAS…ALANEALDDA (131 aa). Mg(2+) is bound by residues Asp-75, Glu-115, Asp-139, and Asp-189. Asp-75, Glu-115, Asp-139, and Asp-189 together coordinate Mn(2+).

It belongs to the RNase H family. Mn(2+) serves as cofactor. Requires Mg(2+) as cofactor. It depends on Co(2+) as a cofactor. Ni(2+) is required as a cofactor.

The protein resides in the cytoplasm. The catalysed reaction is Endonucleolytic cleavage to 5'-phosphomonoester.. In terms of biological role, nuclease that specifically degrades the RNA of RNA-DNA hybrids; seems to act exonucleolytically on RNA/DNA hybrids. Endonucleolytically removes RNA primers from the Okazaki fragments of lagging strand synthesis on its own. Complements the temperature-sensitive phenotype of an E.coli double rnhA/rnhB (RNase H) disruption mutant. The sequence is that of Ribonuclease HI (rnhA) from Halobacterium salinarum (strain ATCC 700922 / JCM 11081 / NRC-1) (Halobacterium halobium).